The following is a 68-amino-acid chain: uncharacterized protein (68 aa).

The disordered stretch occupies residues 1–27 (MNEFEKWIEGRYEPHEQKQKEHEDTMG).

This is an uncharacterized protein from Bacillus subtilis (strain 168).